The primary structure comprises 138 residues: Basic phospholipase A2 chain HDP-1P (138 aa).

An N-terminal signal peptide occupies residues 1-16 (MRILWIVAVCLIGVEG). Intrachain disulfides connect Cys42/Cys131, Cys44/Cys60, Cys59/Cys111, Cys65/Cys138, Cys66/Cys104, Cys73/Cys97, and Cys91/Cys102. Residues Tyr43, Gly45, and Gly47 each coordinate Ca(2+). His63 is an active-site residue. Asp64 contributes to the Ca(2+) binding site. Asp105 is a catalytic residue.

Heterodimer; non-covalently linked. The toxic basic protein has phospholipase A2 activity (chain HDP-1P) and the non-toxic acidic protein functions as its inhibitor (chain HPD-1I (AC A4VBF0)). The cofactor is Ca(2+). In terms of tissue distribution, expressed by the venom gland.

It localises to the secreted. It carries out the reaction a 1,2-diacyl-sn-glycero-3-phosphocholine + H2O = a 1-acyl-sn-glycero-3-phosphocholine + a fatty acid + H(+). With respect to regulation, enzymatic activity and neurotoxicity are inhibited by Triton X-100, which has been determined to be located in the center of the hydrophobic channel of the enzyme. Functionally, heterodimer: shows the same activities as the monomer, but with a lower potency. Monomer: snake venom phospholipase A2 (PLA2) that shows presynaptic neurotoxicity, anticoagulant activity and that weakly inhibits ADP-induced platelet aggregation. Inhibits exocytosis in pancreatic beta cells, confirming it can act presynaptically in inhibiting the exocytosis of neurotransmitters in neurons. PLA2 catalyzes the calcium-dependent hydrolysis of the 2-acyl groups in 3-sn-phosphoglycerides. The sequence is that of Basic phospholipase A2 chain HDP-1P from Vipera nikolskii (Nikolsky's adder).